Reading from the N-terminus, the 222-residue chain is MLCRAACSAGRRLGPAASTAGSRHKHSLPDLPYDYGALEPHINAQIMQLHHSKHHATYVNNLNVTEEKYHEALAKGDVTTQVALQPALKFNGGGHINHSIFWTNLSPKGGGEPKGELLEAIKRDFGSFEKFKEKLTAVSVGVQGSGWGWLGFNKEQGRLQIAACSNQDPLQGTTGLIPLLGIDVWEHAYYLQYKNVRPDYLKAIWNVINWENVSQRYIVCKK.

A mitochondrion-targeting transit peptide spans 1–24 (MLCRAACSAGRRLGPAASTAGSRH). Position 50 (H50) interacts with Mn(2+). At Y58 the chain carries 3'-nitrotyrosine. Residues K68 and K75 each carry the N6-acetyllysine; alternate modification. Residues K68 and K75 each carry the N6-succinyllysine; alternate modification. Mn(2+) is bound at residue H98. An N6-acetyllysine modification is found at K114. N6-acetyllysine; alternate occurs at positions 122 and 130. N6-succinyllysine; alternate occurs at positions 122 and 130. Mn(2+)-binding residues include D183 and H187. K202 is subject to N6-acetyllysine.

Belongs to the iron/manganese superoxide dismutase family. As to quaternary structure, homotetramer. Mn(2+) serves as cofactor. In terms of processing, nitrated under oxidative stress. Nitration coupled with oxidation inhibits the catalytic activity. Acetylation at Lys-122 decreases enzymatic activity. Deacetylated by SIRT3 upon exposure to ionizing radiations or after long fasting. Post-translationally, polyubiquitinated; leading to proteasomal degradation. Deubiquitinated by USP36 which increases protein stability.

The protein resides in the mitochondrion matrix. The enzyme catalyses 2 superoxide + 2 H(+) = H2O2 + O2. Functionally, destroys superoxide anion radicals which are normally produced within the cells and which are toxic to biological systems. This is Superoxide dismutase [Mn], mitochondrial (Sod2) from Rattus norvegicus (Rat).